An 852-amino-acid polypeptide reads, in one-letter code: Patatin-like phospholipase domain-containing protein CaO19.1504 (852 aa).

Positions 41-52 are enriched in low complexity; the sequence is ATTDITTTPIND. A disordered region spans residues 41–184; the sequence is ATTDITTTPI…KKTTPTSSTS (144 aa). The span at 75-95 shows a compositional bias: polar residues; the sequence is INGTVSDSSSITDEDIMNSSY. Low complexity predominate over residues 101–110; the sequence is SSTNLKSNST. A compositionally biased stretch (acidic residues) spans 113–122; that stretch reads DDDDDDDDDD. 2 stretches are compositionally biased toward low complexity: residues 129 to 142 and 158 to 171; these read SGTTDNTSTTSLSS and GGSRSSSSSKKGSS. The chain crosses the membrane as a helical span at residues 207–227; the sequence is WPILIFVFSWIGILGIFYFMI. Positions 396 to 588 constitute a PNPLA domain; sequence LCLSGGACFA…RTDIPIEALN (193 aa). The GXSXG signature appears at 427–431; the sequence is GTSGG. Serine 429 serves as the catalytic Nucleophile. The active-site Proton acceptor is the aspartate 575. Residues 800–840 are disordered; it reads KKLLDELDNEDEEEDEEEEEVDVDDDDDDDDDSLSDSFEIT. The span at 805–833 shows a compositional bias: acidic residues; sequence ELDNEDEEEDEEEEEVDVDDDDDDDDDSL.

This sequence belongs to the PLPL family.

The protein resides in the membrane. In terms of biological role, probable lipid hydrolase. This chain is Patatin-like phospholipase domain-containing protein CaO19.1504, found in Candida albicans (strain SC5314 / ATCC MYA-2876) (Yeast).